The following is a 139-amino-acid chain: Putative pre-16S rRNA nuclease (139 aa).

Belongs to the YqgF nuclease family.

It is found in the cytoplasm. In terms of biological role, could be a nuclease involved in processing of the 5'-end of pre-16S rRNA. This is Putative pre-16S rRNA nuclease from Proteus mirabilis (strain HI4320).